A 428-amino-acid polypeptide reads, in one-letter code: Histidine--tRNA ligase (428 aa).

The protein belongs to the class-II aminoacyl-tRNA synthetase family. As to quaternary structure, homodimer.

Its subcellular location is the cytoplasm. The enzyme catalyses tRNA(His) + L-histidine + ATP = L-histidyl-tRNA(His) + AMP + diphosphate + H(+). This chain is Histidine--tRNA ligase, found in Bordetella pertussis (strain Tohama I / ATCC BAA-589 / NCTC 13251).